A 485-amino-acid polypeptide reads, in one-letter code: Hydrogenase transcriptional regulatory protein HoxA (485 aa).

The Response regulatory domain occupies 6–120; sequence TILVVDDEVR…QLVETVKEAV (115 aa). D54 carries the 4-aspartylphosphate modification. The region spanning 166 to 392 is the Sigma-54 factor interaction domain; the sequence is STESPMHAVI…ELQNEIQRMA (227 aa). ATP is bound by residues 192 to 199 and 264 to 273; these read GESGTGKE and EIGETSPAFQ. A disordered region spans residues 404-426; it reads PLLGRRNGKRSAPLPAHGRLNGS. Residues 451-470 constitute a DNA-binding region (H-T-H motif); that stretch reads NISRVASELGLSRVGLRNKL.

It localises to the cytoplasm. Functionally, probable member of the two-component regulatory system involved in the regulation of the hydrogenase activity. HoxA is probably phosphorylated by a sensory component (which could be HoxX) and then acts in conjunction with sigma-54 as a transcriptional activator. The chain is Hydrogenase transcriptional regulatory protein HoxA (hoxA) from Bradyrhizobium diazoefficiens (strain JCM 10833 / BCRC 13528 / IAM 13628 / NBRC 14792 / USDA 110).